Reading from the N-terminus, the 297-residue chain is Nucleotide-binding protein Bphy_0322 (297 aa).

8-15 (GISGSGKS) serves as a coordination point for ATP. GTP is bound at residue 57-60 (DARS).

This sequence belongs to the RapZ-like family.

Functionally, displays ATPase and GTPase activities. In Paraburkholderia phymatum (strain DSM 17167 / CIP 108236 / LMG 21445 / STM815) (Burkholderia phymatum), this protein is Nucleotide-binding protein Bphy_0322.